A 964-amino-acid polypeptide reads, in one-letter code: Lon protease homolog, mitochondrial (964 aa).

The region spanning 89-300 (VIALPLPHRP…LTLELVKKEM (212 aa)) is the Lon N-terminal domain. Residue 455 to 462 (GPPGVGKT) coordinates ATP. A disordered region spans residues 663–740 (GVSNEPDHES…TSKGNKGTDG (78 aa)). Polar residues predominate over residues 673 to 687 (VSASVTEESGNGDNT). The span at 688 to 698 (TTKDEILKDPA) shows a compositional bias: basic and acidic residues. Over residues 703-712 (SVTNNVTNPA) the composition is skewed to polar residues. The Lon proteolytic domain occupies 773–957 (HTPVGVVMGL…SEIYDLAFQS (185 aa)). Residues Ser863 and Lys906 contribute to the active site.

It belongs to the peptidase S16 family. As to quaternary structure, homoheptamer. Organized in a ring with a central cavity.

The protein localises to the mitochondrion matrix. The enzyme catalyses Hydrolysis of proteins in presence of ATP.. In terms of biological role, ATP-dependent serine protease that mediates the selective degradation of misfolded, unassembled or oxidatively damaged polypeptides as well as certain short-lived regulatory proteins in the mitochondrial matrix. May also have a chaperone function in the assembly of inner membrane protein complexes. Participates in the regulation of mitochondrial gene expression and in the maintenance of the integrity of the mitochondrial genome. Binds to mitochondrial DNA in a site-specific manner. This chain is Lon protease homolog, mitochondrial (LON2), found in Zea mays (Maize).